Reading from the N-terminus, the 387-residue chain is MTSHPVFIDLSLDEQVQELRKYFKKLGAEISSEKSNKGVEDDLHKIIGVCDVCFKDGEPSQIDGILNSIVSIMITIPLDRGENIVLAYCEKMTKAPNQPLAKVCLQSLWRLFNNLDTASPLRYHVYYHLVQVAKQCDQVLEVFTGVDQLKSQFANCPPSSEQMQKLYRLLHDVTKDTNLELSSKVMIELLGTYTADNACVAREDAMKCIVTALADPNTFLLDPLLSLKPVRFLEGDLIHDLLSIFVSDKLPSYVQFYEDHKEFVNSQGLNHEQNMKKMRLLTFMQLAESSPEMTFDTLTKELQITEDEVEPFVIEVLKTKLVRARLDQANRKVHISSTMHRTFGAPQWEQLRDLLQAWKENLSSVREGLTNVSAAQLDLARNQKLVH.

Positions 181–340 (LSSKVMIELL…RKVHISSTMH (160 aa)) constitute a PCI domain.

The protein belongs to the eIF-3 subunit M family. As to quaternary structure, component of the eukaryotic translation initiation factor 3 (eIF-3) complex. The eIF-3 complex interacts with pix.

Its subcellular location is the cytoplasm. It localises to the golgi apparatus. In terms of biological role, component of the eukaryotic translation initiation factor 3 (eIF-3) complex, which is involved in protein synthesis of a specialized repertoire of mRNAs and, together with other initiation factors, stimulates binding of mRNA and methionyl-tRNAi to the 40S ribosome. The eIF-3 complex specifically targets and initiates translation of a subset of mRNAs involved in cell proliferation. This is Eukaryotic translation initiation factor 3 subunit M from Drosophila ananassae (Fruit fly).